A 273-amino-acid chain; its full sequence is Shikimate dehydrogenase (NADP(+)) (273 aa).

Shikimate contacts are provided by residues 18 to 20 (SKS) and T65. K69 functions as the Proton acceptor in the catalytic mechanism. E81 contacts NADP(+). Shikimate is bound by residues N90 and D105. NADP(+) contacts are provided by residues 130 to 134 (GAGGA), 154 to 159 (NRTHSK), and M217. Y219 provides a ligand contact to shikimate. G240 is a binding site for NADP(+).

This sequence belongs to the shikimate dehydrogenase family. As to quaternary structure, homodimer.

The enzyme catalyses shikimate + NADP(+) = 3-dehydroshikimate + NADPH + H(+). It participates in metabolic intermediate biosynthesis; chorismate biosynthesis; chorismate from D-erythrose 4-phosphate and phosphoenolpyruvate: step 4/7. Functionally, involved in the biosynthesis of the chorismate, which leads to the biosynthesis of aromatic amino acids. Catalyzes the reversible NADPH linked reduction of 3-dehydroshikimate (DHSA) to yield shikimate (SA). The polypeptide is Shikimate dehydrogenase (NADP(+)) (Janthinobacterium sp. (strain Marseille) (Minibacterium massiliensis)).